Here is a 175-residue protein sequence, read N- to C-terminus: ATP synthase subunit d, mitochondrial (175 aa).

Serine 2 is modified (N-acetylserine).

This sequence belongs to the ATPase d subunit family.

The protein localises to the mitochondrion inner membrane. In terms of biological role, mitochondrial membrane ATP synthase (F(1)F(0) ATP synthase or Complex V) produces ATP from ADP in the presence of a proton gradient across the membrane which is generated by electron transport complexes of the respiratory chain. F-type ATPases consist of two structural domains, F(1) - containing the extramembraneous catalytic core, and F(0) - containing the membrane proton channel, linked together by a central stalk and a peripheral stalk. During catalysis, ATP synthesis in the catalytic domain of F(1) is coupled via a rotary mechanism of the central stalk subunits to proton translocation. Part of the complex F(0) domain and the peripheric stalk, which acts as a stator to hold the catalytic alpha(3)beta(3) subcomplex and subunit a/ATP6 static relative to the rotary elements. The polypeptide is ATP synthase subunit d, mitochondrial (atp7) (Schizosaccharomyces pombe (strain 972 / ATCC 24843) (Fission yeast)).